The sequence spans 372 residues: tRNA-specific 2-thiouridylase MnmA (372 aa).

Residues 17-24 (GMSGGVDS) and Met-43 contribute to the ATP site. The tract at residues 103–105 (NPD) is interaction with target base in tRNA. Cys-108 functions as the Nucleophile in the catalytic mechanism. Cys-108 and Cys-205 are joined by a disulfide. Gly-133 is a binding site for ATP. The interaction with tRNA stretch occupies residues 155–157 (KDQ). Cys-205 acts as the Cysteine persulfide intermediate in catalysis. The segment at 317–318 (RY) is interaction with tRNA.

Belongs to the MnmA/TRMU family.

The protein localises to the cytoplasm. It catalyses the reaction S-sulfanyl-L-cysteinyl-[protein] + uridine(34) in tRNA + AH2 + ATP = 2-thiouridine(34) in tRNA + L-cysteinyl-[protein] + A + AMP + diphosphate + H(+). Functionally, catalyzes the 2-thiolation of uridine at the wobble position (U34) of tRNA, leading to the formation of s(2)U34. This is tRNA-specific 2-thiouridylase MnmA from Shewanella sediminis (strain HAW-EB3).